A 71-amino-acid chain; its full sequence is Large ribosomal subunit protein eL38 (71 aa).

This sequence belongs to the eukaryotic ribosomal protein eL38 family.

This is Large ribosomal subunit protein eL38 (RpL38) from Ixodes scapularis (Black-legged tick).